The chain runs to 236 residues: Small ribosomal subunit protein uS3 (236 aa).

Residues valine 39–arginine 107 enclose the KH type-2 domain. The interval alanine 215–serine 236 is disordered.

Belongs to the universal ribosomal protein uS3 family. Part of the 30S ribosomal subunit. Forms a tight complex with proteins S10 and S14.

Functionally, binds the lower part of the 30S subunit head. Binds mRNA in the 70S ribosome, positioning it for translation. The sequence is that of Small ribosomal subunit protein uS3 from Methylobacillus flagellatus (strain ATCC 51484 / DSM 6875 / VKM B-1610 / KT).